A 23-amino-acid polypeptide reads, in one-letter code: Paralytic peptide 1 (23 aa).

A disulfide bond links Cys-7 and Cys-19.

This sequence belongs to the GBP/PSP1/paralytic peptide family. Hemolymph.

Its function is as follows. Causes rapid, rigid paralysis when injected into Lepidopteran larvae. The physiological role may be to reduce hemolymph loss following injury and promote wound healing. In Spodoptera exigua (Beet armyworm), this protein is Paralytic peptide 1.